The sequence spans 214 residues: Glutathione S-transferase F11 (214 aa).

A GST N-terminal domain is found at valine 2–glycine 82. Glutathione-binding positions include alanine 11–alanine 12, glutamine 40–lysine 41, glutamine 53–valine 54, and glutamate 66–serine 67. The GST C-terminal domain maps to threonine 89–tyrosine 214.

This sequence belongs to the GST superfamily. Phi family.

It localises to the cytoplasm. The protein localises to the cytosol. The enzyme catalyses RX + glutathione = an S-substituted glutathione + a halide anion + H(+). Functionally, may be involved in the conjugation of reduced glutathione to a wide number of exogenous and endogenous hydrophobic electrophiles and have a detoxification role against certain herbicides. The chain is Glutathione S-transferase F11 from Arabidopsis thaliana (Mouse-ear cress).